The primary structure comprises 272 residues: Indole-3-glycerol phosphate synthase (272 aa).

The protein belongs to the TrpC family.

The enzyme catalyses 1-(2-carboxyphenylamino)-1-deoxy-D-ribulose 5-phosphate + H(+) = (1S,2R)-1-C-(indol-3-yl)glycerol 3-phosphate + CO2 + H2O. The protein operates within amino-acid biosynthesis; L-tryptophan biosynthesis; L-tryptophan from chorismate: step 4/5. This is Indole-3-glycerol phosphate synthase from Mycobacteroides abscessus (strain ATCC 19977 / DSM 44196 / CCUG 20993 / CIP 104536 / JCM 13569 / NCTC 13031 / TMC 1543 / L948) (Mycobacterium abscessus).